A 341-amino-acid chain; its full sequence is Pyrophosphate--fructose 6-phosphate 1-phosphotransferase (341 aa).

G10 is a binding site for diphosphate. A Mg(2+)-binding site is contributed by E103. Substrate contacts are provided by residues 125–127, R162, 169–171, E221, R265, and 271–274; these read TID, MGR, and HVQR. D127 functions as the Proton acceptor in the catalytic mechanism.

This sequence belongs to the phosphofructokinase type A (PFKA) family. Mixed-substrate PFK group III subfamily. In terms of assembly, homodimer or homotetramer. It depends on Mg(2+) as a cofactor.

The protein localises to the cytoplasm. It carries out the reaction beta-D-fructose 6-phosphate + diphosphate = beta-D-fructose 1,6-bisphosphate + phosphate + H(+). It participates in carbohydrate degradation; glycolysis; D-glyceraldehyde 3-phosphate and glycerone phosphate from D-glucose: step 3/4. Non-allosteric. Catalyzes the phosphorylation of D-fructose 6-phosphate, the first committing step of glycolysis. Uses inorganic phosphate (PPi) as phosphoryl donor instead of ATP like common ATP-dependent phosphofructokinases (ATP-PFKs), which renders the reaction reversible, and can thus function both in glycolysis and gluconeogenesis. Consistently, PPi-PFK can replace the enzymes of both the forward (ATP-PFK) and reverse (fructose-bisphosphatase (FBPase)) reactions. The protein is Pyrophosphate--fructose 6-phosphate 1-phosphotransferase of Amycolatopsis mediterranei (strain S699) (Nocardia mediterranei).